The sequence spans 210 residues: ESCRT-III complex subunit did4 (210 aa).

The tract at residues 1 to 38 is disordered; that stretch reads MGLTSWLFGGGKSPQEQLRAHQRSLGRAERELDRERTK. A coiled-coil region spans residues 15-97; it reads QEQLRAHQRS…AISLRLQTMR (83 aa). Positions 26 to 38 are enriched in basic and acidic residues; it reads GRAERELDRERTK.

It belongs to the SNF7 family. In terms of assembly, core component of the ESCRT-III complex (endosomal sorting required for transport complex III). ESCRT-III appears to be sequentially assembled as a flat lattice on the endosome membrane.

The protein localises to the cytoplasm. It localises to the endosome membrane. In terms of biological role, required for the sorting and concentration of proteins resulting in the entry of these proteins into the invaginating vesicles of the multivesicular body (MVB). Acts a component of the ESCRT-III complex, which appears to be critical for late steps in MVB sorting, such as membrane invagination and final cargo sorting and recruitment of late-acting components of the sorting machinery. The MVB pathway requires the sequential function of ESCRT-O, -I,-II and -III complex assemblies. The sequence is that of ESCRT-III complex subunit did4 (did4) from Schizosaccharomyces pombe (strain 972 / ATCC 24843) (Fission yeast).